Consider the following 263-residue polypeptide: MAKRLQAELSCPVCLDFFSCSISLSCTHVFCFDCIQRYILENHDFRAMCPLCRDVVKVPALEEWQVSVLTLMTKQHNSRLEQSLHVREELRHFREDVTLDAATASSLLVFSNDLRSAQCKKIHHDLTKDPRLACVLGTPCFSSGQHYWEVEVGEVKSWSLGVCKEPADRKSNDLFPEHGFWISMKAGAIHANTHLERIPASPRLRRVGIFLDADLEEIQFFDVDNNVLIYTHDGFFSLELLCPFFCLELLGEGESGNVLTICP.

The segment at 11-53 (CPVCLDFFSCSISLSCTHVFCFDCIQRYILENHDFRAMCPLCR) adopts an RING-type zinc-finger fold. The B30.2/SPRY domain occupies 76–263 (HNSRLEQSLH…ESGNVLTICP (188 aa)).

The chain is Ret finger protein-like 4B (RFPL4B) from Homo sapiens (Human).